A 470-amino-acid chain; its full sequence is Alpha-1A adrenergic receptor (470 aa).

At 1-27 the chain is on the extracellular side; sequence MTPSSVTLNCSNCSHVLAPELNTVKAV. Residues Asn9 and Asn12 are each glycosylated (N-linked (GlcNAc...) asparagine). Residues 28–51 form a helical membrane-spanning segment; the sequence is VLGMVLGIFILFGVIGNILVILSV. Residues 52–64 are Cytoplasmic-facing; it reads VCHRHLQTVTYYF. A helical membrane pass occupies residues 65–88; it reads IVNLAVADLLLSSTVLPFSAIFEI. At 89–99 the chain is on the extracellular side; the sequence is LDRWVFGRVFC. Cys99 and Cys176 are oxidised to a cystine. A helical membrane pass occupies residues 100-122; the sequence is NIWAAVDVLCCTASIMSLCVISV. Over 123 to 143 the chain is Cytoplasmic; the sequence is DRYIGVSYPLRYPAIMTKRRA. A helical transmembrane segment spans residues 144 to 167; it reads LLAVMLLWVLSVIISIGPLFGWKE. At 168-181 the chain is on the extracellular side; that stretch reads PAPEDETVCKITEE. Residues 182-205 traverse the membrane as a helical segment; the sequence is PGYAIFSAVGSFYLPLAIILAMYC. Residues 206 to 271 are Cytoplasmic-facing; sequence RVYVVAQKES…FSREKKAAKT (66 aa). The helical transmembrane segment at 272–295 threads the bilayer; it reads LGIVVGCFVLCWLPFFLVLPIGSI. Over 296–303 the chain is Extracellular; that stretch reads FPAYRPSD. The helical transmembrane segment at 304 to 327 threads the bilayer; it reads TVFKITFWLGYFNSCINPIIYLCS. Residues 328-470 are Cytoplasmic-facing; the sequence is NQEFKKAFQS…LSLSEKGESV (143 aa). A lipid anchor (S-palmitoyl cysteine) is attached at Cys343. Residues 375–416 are disordered; sequence GAPCRLSPSSSVALSRTPSSRDSREWRVFSGGPINSGPGPTE. Residues 381–392 are compositionally biased toward polar residues; sequence SPSSSVALSRTP.

This sequence belongs to the G-protein coupled receptor 1 family. Adrenergic receptor subfamily. ADRA1A sub-subfamily.

The protein localises to the cell membrane. Functionally, this alpha-adrenergic receptor mediates its action by association with G proteins that activate a phosphatidylinositol-calcium second messenger system. This is Alpha-1A adrenergic receptor (adra1a) from Oryzias latipes (Japanese rice fish).